A 70-amino-acid chain; its full sequence is Conotoxin TsMLKM-011 (70 aa).

The first 24 residues, 1–24 (MLKMGVVLFVFLVLFPLATLQLDA), serve as a signal peptide directing secretion. A propeptide spanning residues 25–54 (DQPVERYAENKQLVSPYERRQIILHALGQR) is cleaved from the precursor. Cystine bridges form between Cys56–Cys66, Cys57–Cys68, and Cys62–Cys69.

Belongs to the conotoxin M superfamily. Expressed by the venom duct.

It is found in the secreted. The polypeptide is Conotoxin TsMLKM-011 (Conus tessulatus (Tessellate cone)).